A 263-amino-acid chain; its full sequence is MFRNQYDNDVTVWSPQGRIHQIEYAMEAVKQGSATVGLKSKTHAVLVALKRAQSELAAHQKKILHVDNHIGISIAGLTADARLLCNFMRQECLDSRFVFDRPLPVSRLVSLIGSKTQIPTQRYGRRPYGVGLLIAGYDDMGPHIFQTCPSANYFDCRAMSIGARSQSARTYLERHMSEFMECNLNELVKHGLRALRETLPAEQDLTTKNVSIGIVGKDLEFTIYDDDDVSPFLEGLEERPQRKAQPTQPADEPAEKADEPMEH.

Met1 is modified (N-acetylmethionine). Ser110 bears the Phosphoserine; alternate mark. Ser110 carries an O-linked (GlcNAc) serine; alternate glycan. Lys115 participates in a covalent cross-link: Glycyl lysine isopeptide (Lys-Gly) (interchain with G-Cter in ubiquitin). Ser177 carries the phosphoserine modification. Lys208 participates in a covalent cross-link: Glycyl lysine isopeptide (Lys-Gly) (interchain with G-Cter in ubiquitin). Positions 232-263 (FLEGLEERPQRKAQPTQPADEPAEKADEPMEH) are disordered. Residues 253 to 263 (PAEKADEPMEH) show a composition bias toward basic and acidic residues.

The protein belongs to the peptidase T1A family. As to quaternary structure, the 26S proteasome consists of a 20S proteasome core and two 19S regulatory subunits. The 20S proteasome core is a barrel-shaped complex made of 28 subunits that are arranged in four stacked rings. The two outer rings are each formed by seven alpha subunits, and the two inner rings are formed by seven beta subunits. The proteolytic activity is exerted by three beta-subunits PSMB5, PSMB6 and PSMB7. Interacts with NOTCH3. Interacts with ZFAND1.

It is found in the cytoplasm. The protein localises to the nucleus. In terms of biological role, component of the 20S core proteasome complex involved in the proteolytic degradation of most intracellular proteins. This complex plays numerous essential roles within the cell by associating with different regulatory particles. Associated with two 19S regulatory particles, forms the 26S proteasome and thus participates in the ATP-dependent degradation of ubiquitinated proteins. The 26S proteasome plays a key role in the maintenance of protein homeostasis by removing misfolded or damaged proteins that could impair cellular functions, and by removing proteins whose functions are no longer required. Associated with the PA200 or PA28, the 20S proteasome mediates ubiquitin-independent protein degradation. This type of proteolysis is required in several pathways including spermatogenesis (20S-PA200 complex) or generation of a subset of MHC class I-presented antigenic peptides (20S-PA28 complex). This chain is Proteasome subunit alpha type-1 (PSMA1), found in Bos taurus (Bovine).